The following is a 75-amino-acid chain: Protein Tlp homolog (75 aa).

Residues 52-75 (RREALDGMREEIKDEARDKKNGYM) form a disordered region.

Belongs to the Tlp family.

The sequence is that of Protein Tlp homolog from Clostridium botulinum (strain Okra / Type B1).